Here is a 290-residue protein sequence, read N- to C-terminus: OTU domain-containing protein 6A (290 aa).

Positions 27 to 117 are disordered; that stretch reads QTLKASVPKN…RRHQERMPAA (91 aa). The span at 49–68 shows a compositional bias: basic and acidic residues; that stretch reads SRLEAEMEQRHKQELEKFGE. Residues 95 to 108 are compositionally biased toward basic residues; it reads KAQKRRDRRAHQER. One can recognise an OTU domain in the interval 142 to 276; that stretch reads LEMKTIPADG…GEHYNSVKPI (135 aa). Residues 147–153 are cys-loop; that stretch reads IPADGHC. The active site involves D150. C153 functions as the Nucleophile in the catalytic mechanism. Residues 211 to 221 form a variable-loop region; the sequence is IVHNASWGGQL. The segment at 259-269 is his-loop; the sequence is YLHYACDFGEH. Residue H269 is part of the active site.

The enzyme catalyses Thiol-dependent hydrolysis of ester, thioester, amide, peptide and isopeptide bonds formed by the C-terminal Gly of ubiquitin (a 76-residue protein attached to proteins as an intracellular targeting signal).. Deubiquitinating enzyme that hydrolyzes 'Lys-27'-, 'Lys-29'- and 'Lys-33'-linked polyubiquitin chains. Also able to hydrolyze 'Lys-11'-linked ubiquitin chains. The sequence is that of OTU domain-containing protein 6A (Otud6a) from Mus musculus (Mouse).